The sequence spans 221 residues: Agamous-like MADS-box protein AGL14 (221 aa).

The MADS-box domain occupies 3–57; that stretch reads RGKTEMKRIENATSRQVTFSKRRNGLLKKAFELSVLCDAEVALIIFSPRGKLYEF. Residues 87-177 form the K-box domain; it reads SQQSKDETYG…MEKCEMQGRG (91 aa).

In terms of assembly, interacts with AGL16. Preferentially expressed in roots. Expressed in lateral root cap, root epidermis, root endodermis, columella of the root meristematic region, the vascular cylinder in differentiated zones of the primary root and in emerged lateral root primordia. Expressed in pollen.

It is found in the nucleus. In terms of biological role, transcriptional activator that regulates root development by controlling meristem size and patterning of the root apical meristem. Regulates auxin transport and gradients in the root meristematic cells via direct regulation of the auxin efflux carrier PIN1 and PIN4 gene expression. Binds specifically to the CArG-box DNA sequences in the promoter regions of PIN1 and PIN4 genes. Involved in the regulation of shoot apical meristem (SAM) cell identities and transitions. Promotes flowering transition and participates in flower meristem maintenance and determinacy. Positively regulates TFL1 and WUS expression. Binds directly to the TFL1 regulatory sequences. The polypeptide is Agamous-like MADS-box protein AGL14 (Arabidopsis thaliana (Mouse-ear cress)).